A 323-amino-acid chain; its full sequence is G patch domain-containing protein 4 (323 aa).

4 disordered regions span residues 1–32, 84–110, 124–185, and 197–323; these read MSAS…GLGR, GVKV…SNRN, PGGE…SAKL, and AKYG…NKSE. 2 stretches are compositionally biased toward basic and acidic residues: residues 9 to 32 and 84 to 94; these read SQGR…GLGR and GVKVNRTKDDD. In terms of domain architecture, G-patch spans 11 to 57; the sequence is GRRFAEQQMHKHGWTEGKGLGRRENGISEAIKVKVKCDHAGVGHNSA. The segment covering 131 to 141 has biased composition (low complexity); it reads KEPSSSESSDS. Residues 252–261 show a composition bias toward acidic residues; that stretch reads EREEEEEEES. Basic residues predominate over residues 281 to 291; it reads SKKKKSKKKHR. Over residues 294-306 the composition is skewed to polar residues; that stretch reads SASPQEEQVTEST. Positions 311 to 323 are enriched in basic residues; it reads KPKKKKKKKNKSE.

The polypeptide is G patch domain-containing protein 4 (gpatch4) (Xenopus tropicalis (Western clawed frog)).